We begin with the raw amino-acid sequence, 132 residues long: Small ribosomal subunit protein uS8 (132 aa).

It belongs to the universal ribosomal protein uS8 family. Part of the 30S ribosomal subunit. Contacts proteins S5 and S12.

Functionally, one of the primary rRNA binding proteins, it binds directly to 16S rRNA central domain where it helps coordinate assembly of the platform of the 30S subunit. The polypeptide is Small ribosomal subunit protein uS8 (Agrobacterium fabrum (strain C58 / ATCC 33970) (Agrobacterium tumefaciens (strain C58))).